The primary structure comprises 204 residues: Small ribosomal subunit protein uS7 (204 aa).

An N-acetylmethionine modification is found at Met-1. Position 2 is an N-acetylthreonine; in 40S ribosomal protein S5, N-terminally processed (Thr-2). Thr-14 is modified (phosphothreonine). At Lys-47 the chain carries N6-acetyllysine; alternate. Lys-47 participates in a covalent cross-link: Glycyl lysine isopeptide (Lys-Gly) (interchain with G-Cter in SUMO2); alternate. Ser-142 carries the post-translational modification Phosphoserine.

This sequence belongs to the universal ribosomal protein uS7 family. Component of the small ribosomal subunit. Part of the small subunit (SSU) processome, composed of more than 70 proteins and the RNA chaperone small nucleolar RNA (snoRNA) U3.

Its subcellular location is the cytoplasm. The protein resides in the nucleus. The protein localises to the nucleolus. Its function is as follows. Component of the small ribosomal subunit. The ribosome is a large ribonucleoprotein complex responsible for the synthesis of proteins in the cell. Part of the small subunit (SSU) processome, first precursor of the small eukaryotic ribosomal subunit. During the assembly of the SSU processome in the nucleolus, many ribosome biogenesis factors, an RNA chaperone and ribosomal proteins associate with the nascent pre-rRNA and work in concert to generate RNA folding, modifications, rearrangements and cleavage as well as targeted degradation of pre-ribosomal RNA by the RNA exosome. The protein is Small ribosomal subunit protein uS7 (Rps5) of Mus musculus (Mouse).